Consider the following 208-residue polypeptide: Putative ankyrin repeat protein Ta0196 (208 aa).

ANK repeat units lie at residues 49 to 78 (YQRNALMISAMYGRTDLIEFFAARYDHIDD), 82 to 111 (EGNTALMWAVRNNRMESAKSLIALKCSIDI), 115 to 144 (AGNTPICWAVIFGYTDMVKLLISSGANINI), and 148 to 177 (EGDTPAILASKYGRSECLKMLIEAGCDLNA).

The protein is Putative ankyrin repeat protein Ta0196 of Thermoplasma acidophilum (strain ATCC 25905 / DSM 1728 / JCM 9062 / NBRC 15155 / AMRC-C165).